The sequence spans 174 residues: NADH-ubiquinone oxidoreductase chain 6 (174 aa).

Helical transmembrane passes span 1–21 (MTYV…GFSS), 24–44 (SPIY…GIVL), 46–66 (FGGS…MLVV), 86–106 (VMIL…VVYM), and 151–171 (WLMV…IEIT).

This sequence belongs to the complex I subunit 6 family. Core subunit of respiratory chain NADH dehydrogenase (Complex I) which is composed of 45 different subunits.

Its subcellular location is the mitochondrion inner membrane. It carries out the reaction a ubiquinone + NADH + 5 H(+)(in) = a ubiquinol + NAD(+) + 4 H(+)(out). Its function is as follows. Core subunit of the mitochondrial membrane respiratory chain NADH dehydrogenase (Complex I) which catalyzes electron transfer from NADH through the respiratory chain, using ubiquinone as an electron acceptor. Essential for the catalytic activity and assembly of complex I. The chain is NADH-ubiquinone oxidoreductase chain 6 (MT-ND6) from Oryctolagus cuniculus (Rabbit).